The following is a 188-amino-acid chain: Methylamine dehydrogenase light chain (188 aa).

Residues 1 to 57 (MLGNFRFDDMVEKLSRRVAGQTSRRSVIGKLGTAMLGIGLVPLLPVDRRGRVSRANA) constitute a signal peptide (tat-type signal). Cystine bridges form between C80–C145, C86–C118, C93–C178, C95–C143, C103–C134, and C135–C166. W114 carries the post-translational modification Tryptophylquinone. A cross-link (tryptophan tryptophylquinone (Trp-Trp)) is located at residues 114-165 (WVASCYNPTDGQSYLIAYRDCCGYNVSGRCPCLNTEGELPVYRPEFANDIIW).

It belongs to the aromatic amine dehydrogenase light chain family. As to quaternary structure, heterotetramer of two light and two heavy chains. Tryptophan tryptophylquinone residue is required as a cofactor. In terms of processing, predicted to be exported by the Tat system. The position of the signal peptide cleavage has not been experimentally proven. Tryptophan tryptophylquinone (TTQ) is formed by oxidation of the indole ring of a tryptophan to form tryptophylquinone followed by covalent cross-linking with another tryptophan residue.

The protein localises to the periplasm. The enzyme catalyses 2 oxidized [amicyanin] + methylamine + H2O = 2 reduced [amicyanin] + formaldehyde + NH4(+) + 2 H(+). It participates in one-carbon metabolism; methylamine degradation; formaldehyde from methylamine: step 1/1. In terms of biological role, methylamine dehydrogenase carries out the oxidation of methylamine. Electrons are passed from methylamine dehydrogenase to amicyanin. The sequence is that of Methylamine dehydrogenase light chain (mauA) from Paracoccus denitrificans.